The following is a 308-amino-acid chain: Dual oxidase maturation factor 1 (308 aa).

At 1–21 the chain is on the extracellular side; the sequence is MQANIFPFYPQPRTSFKFDTK. Residues 22–42 form a helical membrane-spanning segment; that stretch reads IIEIIIICIVTACTFIIILPG. At 43 to 49 the chain is on the cytoplasmic side; that stretch reads IRGKSRS. A helical transmembrane segment spans residues 50-70; it reads IWLFRILTSLFIGAVILAVNF. Topologically, residues 71–172 are extracellular; that stretch reads TSDWETGIVT…SPCGLFQQYC (102 aa). N-linked (GlcNAc...) asparagine glycosylation is found at Asn94, Asn107, and Asn119. A helical membrane pass occupies residues 173 to 195; sequence ISTYYSSEIMWVAFGSWILYNVL. The Cytoplasmic portion of the chain corresponds to 196-199; it reads FSMP. The helical transmembrane segment at 200–220 threads the bilayer; that stretch reads VILYGICMMFVTAICMLVSLI. The Extracellular segment spans residues 221-247; the sequence is SFASVRQAPVCNIHFGNAVLKTHFGVS. Residues 248–268 traverse the membrane as a helical segment; that stretch reads YWLSLVTGLFCLIVSLVLLFL. Topologically, residues 269-308 are cytoplasmic; that stretch reads YKTQPKVIRLIFSYGEEEDLSDKSENEEEHSSALSLNEML.

This sequence belongs to the DUOXA family.

It localises to the membrane. In terms of biological role, possible role in maturation and transport from the endoplasmic reticulum to the plasma membrane of functional dual oxidase. The sequence is that of Dual oxidase maturation factor 1 (duoxa1) from Xenopus tropicalis (Western clawed frog).